The sequence spans 363 residues: NAD(P)H-quinone oxidoreductase subunit 1, chloroplastic (363 aa).

6 helical membrane passes run 26-46 (IIWVLIPIFTPVLGITIGVLV), 98-118 (FSIGPSIAVISILLSYLVIPF), 127-147 (LSIGVFLWIAISSIAPVGLLM), 253-273 (FGLFYVASYLNLLVSSLFVTV), 300-320 (VFGTIIGIFITLAKTYLFLFI), and 336-356 (LLNLGWKFLLPISLGNLLLTT).

Belongs to the complex I subunit 1 family. NDH is composed of at least 16 different subunits, 5 of which are encoded in the nucleus.

The protein resides in the plastid. It is found in the chloroplast thylakoid membrane. The catalysed reaction is a plastoquinone + NADH + (n+1) H(+)(in) = a plastoquinol + NAD(+) + n H(+)(out). It carries out the reaction a plastoquinone + NADPH + (n+1) H(+)(in) = a plastoquinol + NADP(+) + n H(+)(out). Its function is as follows. NDH shuttles electrons from NAD(P)H:plastoquinone, via FMN and iron-sulfur (Fe-S) centers, to quinones in the photosynthetic chain and possibly in a chloroplast respiratory chain. The immediate electron acceptor for the enzyme in this species is believed to be plastoquinone. Couples the redox reaction to proton translocation, and thus conserves the redox energy in a proton gradient. The sequence is that of NAD(P)H-quinone oxidoreductase subunit 1, chloroplastic from Helianthus annuus (Common sunflower).